The sequence spans 220 residues: MSQRGRATRPTGPTGRPRRTGGQRSAGRVSRGGDLASRRARLHEVVEPVVGEAGYDLEELSISRAGRRHVVQVIVDADGGIDLDAVADVSRAVSAALDAAEEARGDIVAGEYQLEVSSPGVSRPLTLPRHWRRNAGRLVRVTVRGGPDAGDRQLTGRVVEADDEQVVLETDAGRAGWSYAELGPGRVQVEFTRPGETDGADGADEAGDFDDDDDVEGEER.

Low complexity predominate over residues 1–15 (MSQRGRATRPTGPTG). Disordered regions lie at residues 1–35 (MSQR…GGDL) and 184–220 (PGRV…GEER). Over residues 198–220 (DGADGADEAGDFDDDDDVEGEER) the composition is skewed to acidic residues.

Belongs to the RimP family.

It localises to the cytoplasm. Functionally, required for maturation of 30S ribosomal subunits. This chain is Ribosome maturation factor RimP, found in Salinispora tropica (strain ATCC BAA-916 / DSM 44818 / JCM 13857 / NBRC 105044 / CNB-440).